Reading from the N-terminus, the 70-residue chain is DNA gyrase inhibitor YacG (70 aa).

The span at 1–15 (MPEDKKAAAKVEPLR) shows a compositional bias: basic and acidic residues. The segment at 1–22 (MPEDKKAAAKVEPLRKTRPCPE) is disordered. Zn(2+) is bound by residues C20, C23, C35, and C39.

It belongs to the DNA gyrase inhibitor YacG family. In terms of assembly, interacts with GyrB. It depends on Zn(2+) as a cofactor.

In terms of biological role, inhibits all the catalytic activities of DNA gyrase by preventing its interaction with DNA. Acts by binding directly to the C-terminal domain of GyrB, which probably disrupts DNA binding by the gyrase. The chain is DNA gyrase inhibitor YacG from Rhizobium johnstonii (strain DSM 114642 / LMG 32736 / 3841) (Rhizobium leguminosarum bv. viciae).